The primary structure comprises 279 residues: Movement protein (279 aa).

It belongs to the cucumovirus movement protein family.

It localises to the host cell junction. Its subcellular location is the host plasmodesma. In terms of biological role, transports viral genome to neighboring plant cells directly through plasmosdesmata, without any budding. The movement protein allows efficient cell to cell propagation, by bypassing the host cell wall barrier. Acts by forming a tubular structure at the host plasmodesmata, enlarging it enough to allow free passage of virion capsids. The polypeptide is Movement protein (Cucumber mosaic virus (strain As) (CMV)).